The following is a 459-amino-acid chain: Glutamate--isopropylamine ligase (459 aa).

The GS beta-grasp domain maps to 19-115; that stretch reads HNIDTIRLGA…VLCDIQHLNG (97 aa). A GS catalytic domain is found at 122–459; it reads PRNLLRKAIE…WELARYLDII (338 aa).

Belongs to the glutamine synthetase family.

It carries out the reaction isopropylamine + L-glutamate + ATP = gamma-L-glutamyl-isopropylamide + ADP + phosphate + H(+). Involved in the degradation of isopropylamine, which is a constituent of the herbicides atrazine. Catalyzes the ATP-dependent formation of gamma-glutamyl-isopropylamide from isopropylamine and L-glutamate. It can also use aminoalkanes, amino-alcohols (L-alaninol and D-alaninol) and amino-esters as substrates. The protein is Glutamate--isopropylamine ligase (ipuC) of Pseudomonas sp.